Reading from the N-terminus, the 628-residue chain is tRNA uridine 5-carboxymethylaminomethyl modification enzyme MnmG 1 (628 aa).

11–16 (GAGHAG) is an FAD binding site. 280 to 294 (GPRHCPSIDRKVLNF) contributes to the NAD(+) binding site.

This sequence belongs to the MnmG family. As to quaternary structure, homodimer. Heterotetramer of two MnmE and two MnmG subunits. Requires FAD as cofactor.

It localises to the cytoplasm. NAD-binding protein involved in the addition of a carboxymethylaminomethyl (cmnm) group at the wobble position (U34) of certain tRNAs, forming tRNA-cmnm(5)s(2)U34. The chain is tRNA uridine 5-carboxymethylaminomethyl modification enzyme MnmG 1 from Fusobacterium nucleatum subsp. nucleatum (strain ATCC 25586 / DSM 15643 / BCRC 10681 / CIP 101130 / JCM 8532 / KCTC 2640 / LMG 13131 / VPI 4355).